The following is a 377-amino-acid chain: MLMQDSNSFSTVTPQVARFDTPLHLKSGAVLDSYELVYETYGELNAARSNAVLVCHALSGNHHLAGLYDDNPKSAGWWNNMIGPGKSIDTQKFFLIGVNNLGGCHGSTGPASIDVRTGKCYGPNFPVVTVEDWVQTQVRLADYLGIDQFAAVAGGSLGGMQALQWTLDFPERVRHALVIAAAAKLTAQNIAFNDVARQAIITDPDFHGGDYYSHGVIPRRGLRLARMLGHITYLSDDSMAAKFGRELRNGALAFGYDVEFEIESYLRYQGDKFASQFDANTYLLMTKALDYFDPAFPHNNDLSAAFRFARANFLVLSFTTDWRFSPERSRAIVRALLDNELNVSYAEITSSHGHDSFLMEDRHYHRLVRAYMDNVVV.

In terms of domain architecture, AB hydrolase-1 spans 50–359; it reads NAVLVCHALS…SSHGHDSFLM (310 aa). Ser-156 (nucleophile) is an active-site residue. Position 226 (Arg-226) interacts with substrate. Catalysis depends on residues Asp-321 and His-354. Asp-355 contributes to the substrate binding site.

It belongs to the AB hydrolase superfamily. MetX family. In terms of assembly, homodimer.

It is found in the cytoplasm. The catalysed reaction is L-homoserine + succinyl-CoA = O-succinyl-L-homoserine + CoA. Its pathway is amino-acid biosynthesis; L-methionine biosynthesis via de novo pathway; O-succinyl-L-homoserine from L-homoserine: step 1/1. Its function is as follows. Transfers a succinyl group from succinyl-CoA to L-homoserine, forming succinyl-L-homoserine. The protein is Homoserine O-succinyltransferase of Nitrosospira multiformis (strain ATCC 25196 / NCIMB 11849 / C 71).